We begin with the raw amino-acid sequence, 146 residues long: MRVVLQRSKKASVTVDGEIVGQIPFGLTLLVGITHEDTEKDATYIAEKIANLRIFEDESGKMNHSVLDVEGQVLSISQFTLYGDCRKGRRPNFMDAAKPDYAERLYDFFNEEVRKQGLHVETGKFGAMMDVSLINDGPVTLIVESK.

The Gly-cisPro motif, important for rejection of L-amino acids motif lies at 137 to 138 (GP).

It belongs to the DTD family. As to quaternary structure, homodimer.

It is found in the cytoplasm. The enzyme catalyses glycyl-tRNA(Ala) + H2O = tRNA(Ala) + glycine + H(+). It catalyses the reaction a D-aminoacyl-tRNA + H2O = a tRNA + a D-alpha-amino acid + H(+). Functionally, an aminoacyl-tRNA editing enzyme that deacylates mischarged D-aminoacyl-tRNAs. Also deacylates mischarged glycyl-tRNA(Ala), protecting cells against glycine mischarging by AlaRS. Acts via tRNA-based rather than protein-based catalysis; rejects L-amino acids rather than detecting D-amino acids in the active site. By recycling D-aminoacyl-tRNA to D-amino acids and free tRNA molecules, this enzyme counteracts the toxicity associated with the formation of D-aminoacyl-tRNA entities in vivo and helps enforce protein L-homochirality. The protein is D-aminoacyl-tRNA deacylase of Bacillus cereus (strain ATCC 14579 / DSM 31 / CCUG 7414 / JCM 2152 / NBRC 15305 / NCIMB 9373 / NCTC 2599 / NRRL B-3711).